Consider the following 84-residue polypeptide: Small ribosomal subunit protein bS16 (84 aa).

Belongs to the bacterial ribosomal protein bS16 family.

This is Small ribosomal subunit protein bS16 from Methylococcus capsulatus (strain ATCC 33009 / NCIMB 11132 / Bath).